A 149-amino-acid chain; its full sequence is Sex-regulated protein janus-A (149 aa).

K46 provides a ligand contact to substrate. Residue H77 is the Proton acceptor of the active site. 118 to 120 (STG) serves as a coordination point for substrate.

This sequence belongs to the janus family.

Functionally, janA and janB regulate somatic sex differentiation. The sequence is that of Sex-regulated protein janus-A (janA) from Drosophila pseudoobscura pseudoobscura (Fruit fly).